The sequence spans 85 residues: MKMTLIAIPTCAAVLVLHTTAAEELEAESQLMEVGMPDTELEAVDGERLFECSVSCEIEKEGNRDCKKKKCKGGWKCKFNMCVKV.

The first 22 residues, 1–22 (MKMTLIAIPTCAAVLVLHTTAA), serve as a signal peptide directing secretion. A propeptide spanning residues 23 to 48 (EELEAESQLMEVGMPDTELEAVDGER) is cleaved from the precursor. 3 disulfides stabilise this stretch: Cys52/Cys66, Cys56/Cys77, and Cys71/Cys82.

Belongs to the neurotoxin 12 (Hwtx-2) family. 02 (Hwtx-2) subfamily. In terms of tissue distribution, expressed by the venom gland.

Its subcellular location is the secreted. Its function is as follows. Postsynaptic neurotoxin. In Cyriopagopus hainanus (Chinese bird spider), this protein is U4-theraphotoxin-Hhn1p.